Consider the following 205-residue polypeptide: LexA repressor (205 aa).

Residues 28–48 (RAEIAKRLGFKSANAAEEHLK) constitute a DNA-binding region (H-T-H motif). Active-site for autocatalytic cleavage activity residues include S122 and K159.

It belongs to the peptidase S24 family. Homodimer.

The enzyme catalyses Hydrolysis of Ala-|-Gly bond in repressor LexA.. In terms of biological role, represses a number of genes involved in the response to DNA damage (SOS response), including recA and lexA. In the presence of single-stranded DNA, RecA interacts with LexA causing an autocatalytic cleavage which disrupts the DNA-binding part of LexA, leading to derepression of the SOS regulon and eventually DNA repair. In Shewanella woodyi (strain ATCC 51908 / MS32), this protein is LexA repressor.